The sequence spans 485 residues: Ribulose bisphosphate carboxylase large chain (485 aa).

Residues Asn124 and Thr174 each contribute to the substrate site. The active-site Proton acceptor is Lys176. Lys178 provides a ligand contact to substrate. Residues Lys202, Asp204, and Glu205 each contribute to the Mg(2+) site. Position 202 is an N6-carboxylysine (Lys202). The active-site Proton acceptor is His294. Substrate is bound by residues Arg295, His327, and Ser379.

The protein belongs to the RuBisCO large chain family. Type I subfamily. Heterohexadecamer of 8 large chains and 8 small chains. The cofactor is Mg(2+).

The enzyme catalyses 2 (2R)-3-phosphoglycerate + 2 H(+) = D-ribulose 1,5-bisphosphate + CO2 + H2O. It catalyses the reaction D-ribulose 1,5-bisphosphate + O2 = 2-phosphoglycolate + (2R)-3-phosphoglycerate + 2 H(+). In terms of biological role, ruBisCO catalyzes two reactions: the carboxylation of D-ribulose 1,5-bisphosphate, the primary event in carbon dioxide fixation, as well as the oxidative fragmentation of the pentose substrate in the photorespiration process. Both reactions occur simultaneously and in competition at the same active site. The polypeptide is Ribulose bisphosphate carboxylase large chain (Rhodopseudomonas palustris (strain BisB18)).